The sequence spans 226 residues: VEKVIPGSAAEKAGLQKGDRIVKVGSQEIDVWHTFTSFVSNNPNVPLELSVDRAGHIISLSMTPEVRQQSGGRKVGFAGVELRIVPLADEYKIVQQYGPFSAMYQAGDKTWQLMRLTVSMIGKLIVGDVKINNLSGPISIAKGAGVSADSGLVYYLMFLALISVNLGIINLIPLPVLDGGHLLFLFIEKIKGGPVSERVQDFSYRIGAMILVLLMGLALFNDFSRF.

The 56-residue stretch at Val-1–His-56 folds into the PDZ domain. 2 helical membrane-spanning segments follow: residues Leu-152 to Leu-174 and Phe-202 to Asn-221.

This sequence belongs to the peptidase M50B family. As to quaternary structure, interacts with RseA. Requires Zn(2+) as cofactor.

The protein resides in the cell inner membrane. Functionally, a site-2 regulated intramembrane protease (S2P) that cleaves the peptide bond between 'Ala-108' and 'Cys-109' in the transmembrane region of RseA. Part of a regulated intramembrane proteolysis (RIP) cascade. Acts on DegS-cleaved RseA to release the cytoplasmic domain of RseA. This provides the cell with sigma-E (RpoE) activity through the proteolysis of RseA. The sequence is that of Protease RseP (rseP) from Photorhabdus luminescens (Xenorhabdus luminescens).